The sequence spans 196 residues: MHMEEHALSAMDDELKLMLGRFRHEQFVEKLGWRLPIPPHQAGYEWDQYDTEHARYLLAFNEHRSIVGCARLIPTTFPNLLEGVFSHACAGAPPRHPAIWEMTRFTTREPQLAMPLFWKTLKTASLAGADAIVGIVNSTMERYYKINGVKYERLGSVIDHQNEKILAIKLSAHREHHRGARLPSGFTSEALLEETA.

Belongs to the autoinducer synthase family.

It catalyses the reaction a fatty acyl-[ACP] + S-adenosyl-L-methionine = an N-acyl-L-homoserine lactone + S-methyl-5'-thioadenosine + holo-[ACP] + H(+). Its function is as follows. Required for the synthesis of a yet unknown N-aceyl-homoserine lactone (N-aceyl-HSL), an autoinducer molecule which binds to PhzR and thus regulates phenazine production. The polypeptide is Acyl-homoserine-lactone synthase (phzI) (Pseudomonas fluorescens).